The chain runs to 412 residues: Putative competence-damage inducible protein (412 aa).

The protein belongs to the CinA family.

This is Putative competence-damage inducible protein from Bacillus cereus (strain AH820).